Reading from the N-terminus, the 377-residue chain is Tyrosine-protein phosphatase 2 (377 aa).

The Tyrosine-protein phosphatase domain occupies 27–347; it reads IDKEFNFILQ…RFCYLAISEA (321 aa). Positions 77-137 are disordered; the sequence is IDDDDDDEDD…EDHGGSGDEG (61 aa). The span at 78 to 91 shows a compositional bias: acidic residues; it reads DDDDDDEDDNEDDI. Residues 92–102 are compositionally biased toward low complexity; the sequence is IVSNNNNNNNN. Residues 113–123 are compositionally biased toward polar residues; that stretch reads GSSGQSDVMSN. Cys281 functions as the Phosphocysteine intermediate in the catalytic mechanism.

This sequence belongs to the protein-tyrosine phosphatase family. Non-receptor class subfamily.

The enzyme catalyses O-phospho-L-tyrosyl-[protein] + H2O = L-tyrosyl-[protein] + phosphate. The chain is Tyrosine-protein phosphatase 2 (ptpB) from Dictyostelium discoideum (Social amoeba).